The chain runs to 453 residues: uncharacterized protein (453 aa).

Disordered stretches follow at residues 183–210 (GNGR…RSLS) and 428–453 (PDSM…QYSK). The segment covering 198-207 (TKAHNYKTRR) has biased composition (basic residues). A compositionally biased stretch (polar residues) spans 433-453 (HPPTFSKNNTSSNPKSHQYSK).

This is an uncharacterized protein from Saccharomyces cerevisiae (strain ATCC 204508 / S288c) (Baker's yeast).